Here is a 1273-residue protein sequence, read N- to C-terminus: Paired amphipathic helix protein Sin3a (1273 aa).

2 disordered regions span residues 1–23 (MKRRLDDQESPVYAAQQRRIPGS) and 87–110 (HPTAVQPHGGQVVQSHAHPAPPVA). S10 is subject to Phosphoserine. The PAH 1 domain maps to 119 to 189 (QRLKVEDALS…MGFNTFLPPG (71 aa)). The interaction with HCFC1 stretch occupies residues 119-196 (QRLKVEDALS…PPGYKIEVQT (78 aa)). Glycyl lysine isopeptide (Lys-Gly) (interchain with G-Cter in SUMO2) cross-links involve residues K122 and K134. Positions 205 to 297 (PGQVHQIPTH…ISLGTAPSLQ (93 aa)) are disordered. The interval 205–480 (PGQVHQIPTH…RKALRSAEAY (276 aa)) is interaction with REST. A compositionally biased stretch (low complexity) spans 228–237 (SQPSAQSAPA). Residues 238 to 248 (PAQPAPQPPPA) are compositionally biased toward pro residues. Positions 252–266 (KPSQLQAHTPASQQT) are enriched in polar residues. Residues 267-282 (PPLPPYASPRSPPVQP) are compositionally biased toward pro residues. S277 bears the Phosphoserine mark. Residue T284 is modified to Phosphothreonine. A compositionally biased stretch (polar residues) spans 284–297 (TPVTISLGTAPSLQ). The PAH 2 domain occupies 300–383 (QPVEFNHAIN…SEFGQFLPDA (84 aa)). The interval 398–446 (DSVRNDHGGTVKKPQLNNKPQRPSQNGCQIRRHPTGTTPPVKKKPKLLN) is disordered. Polar residues predominate over residues 412–425 (QLNNKPQRPSQNGC). Positions 456–525 (SKHGGGTESL…NWFKNFLGYK (70 aa)) constitute a PAH 3 domain. The segment at 458–525 (HGGGTESLFF…NWFKNFLGYK (68 aa)) is interaction with SAP30. K469 is modified (N6-acetyllysine). The interaction with NCOR1 stretch occupies residues 523–850 (GYKESVHLET…EMDVDEATGA (328 aa)). An interaction with SUDS3 and SAP130 region spans residues 524–659 (YKESVHLETY…KFRLDNTLGG (136 aa)). Residue K563 forms a Glycyl lysine isopeptide (Lys-Gly) (interchain with G-Cter in SUMO2) linkage. Residues 687-829 (NPSIAVPIVL…IPDLLFAQRG (143 aa)) form an interaction with HDAC1 and ARID4B region. Phosphoserine is present on residues S832 and S860. An N6-acetyllysine mark is found at K865 and K875. Residues 888 to 967 (VNNNWYIFMR…YYPAFLDMVR (80 aa)) form an interaction with OGT region. Residues 903–932 (CLRLLRICSQAERQIEEENREREWEREVLG) are a coiled coil. Residues S940, S1089, and S1112 each carry the phosphoserine modification. The tract at residues 1136–1156 (CQRGREQQEKEGKEGNSKKTM) is disordered. Over residues 1138-1156 (RGREQQEKEGKEGNSKKTM) the composition is skewed to basic and acidic residues.

Interacts with ARID4B, BRMS1L, HCFC1, HDAC1, HDAC2, MXI1, SAP30L, SAP130, SFPQ and TOPORS. Interacts with OGT (via TPRs 1-6); the interaction mediates transcriptional repression in parallel with histone deacetylase. Interacts with BAZ2A, MXD1, MXD3, MXD4, MBD2, DACH1, NCOR1, NR4A2, REST, RLIM, SAP30, SETDB1, SMYD2, and SUDS3. Interacts with PHF12 in a complex composed of HDAC1, PHF12 and SAP30. Interacts with TET1; the interaction recruits SIN3A to gene promoters. The large PER complex involved in the histone deacetylation is composed of at least HDAC1, PER2, SFPQ and SIN3A. Interacts with KLF11. Interacts with PPHLN1. Found in a complex with YY1, GON4L and HDAC1. Interacts (via PAH2) with FOXK1. Interacts with FOXK2. Found in a complex composed of at least SINHCAF, SIN3A, HDAC1, SAP30, RBBP4, OGT and TET1. Interacts with SINHCAF. Interacts with SPHK2. SUMO1 sumoylated by TOPORS. Probably desumoylated by SENP2. In terms of tissue distribution, expressed in the developing brain, with highest levels of expression detected in the ventricular zone of various cortical regions.

The protein resides in the nucleus. It is found in the nucleolus. Acts as a transcriptional repressor. Corepressor for REST. Interacts with MXI1 to repress MYC responsive genes and antagonize MYC oncogenic activities. Also interacts with MXD1-MAX heterodimers to repress transcription by tethering SIN3A to DNA. Acts cooperatively with OGT to repress transcription in parallel with histone deacetylation. Involved in the control of the circadian rhythms. Required for the transcriptional repression of circadian target genes, such as PER1, mediated by the large PER complex through histone deacetylation. Cooperates with FOXK1 to regulate cell cycle progression probably by repressing cell cycle inhibitor genes expression. Required for cortical neuron differentiation and callosal axon elongation. This Homo sapiens (Human) protein is Paired amphipathic helix protein Sin3a.